Reading from the N-terminus, the 171-residue chain is CASP-like protein 0U2 (171 aa).

Residues 1–22 (MPVFGLAALKLNWEALSTPKFR) lie on the Cytoplasmic side of the membrane. The chain crosses the membrane as a helical span at residues 23 to 42 (VTFAQWVCSLLMWSLMASYS). The Extracellular portion of the chain corresponds to 43–48 (KHGEFK). A helical transmembrane segment spans residues 49–69 (FVVVFGLVMWGLASTYLVYQL). At 70–77 (LNGPPLAP) the chain is on the cytoplasmic side. Residues 78–98 (IVEFWANVAAGSLAFICLVLA) traverse the membrane as a helical segment. Residues 99 to 121 (SATCNRAVGEPQTKVCSGELKPK) are Extracellular-facing. The chain crosses the membrane as a helical span at residues 122-142 (ASAAFAFLLLCAYGGLAYLSW). The Cytoplasmic portion of the chain corresponds to 143-171 (RTWRNPPTIASYALHDDPEFAQPLHSSHK).

It belongs to the Casparian strip membrane proteins (CASP) family. As to quaternary structure, homodimer and heterodimers.

Its subcellular location is the cell membrane. This chain is CASP-like protein 0U2, found in Chlorokybus atmophyticus (Soil alga).